The sequence spans 251 residues: 1-(5-phosphoribosyl)-5-[(5-phosphoribosylamino)methylideneamino] imidazole-4-carboxamide isomerase (251 aa).

D8 functions as the Proton acceptor in the catalytic mechanism. D131 acts as the Proton donor in catalysis.

It belongs to the HisA/HisF family.

Its subcellular location is the cytoplasm. The enzyme catalyses 1-(5-phospho-beta-D-ribosyl)-5-[(5-phospho-beta-D-ribosylamino)methylideneamino]imidazole-4-carboxamide = 5-[(5-phospho-1-deoxy-D-ribulos-1-ylimino)methylamino]-1-(5-phospho-beta-D-ribosyl)imidazole-4-carboxamide. It participates in amino-acid biosynthesis; L-histidine biosynthesis; L-histidine from 5-phospho-alpha-D-ribose 1-diphosphate: step 4/9. This Burkholderia cenocepacia (strain ATCC BAA-245 / DSM 16553 / LMG 16656 / NCTC 13227 / J2315 / CF5610) (Burkholderia cepacia (strain J2315)) protein is 1-(5-phosphoribosyl)-5-[(5-phosphoribosylamino)methylideneamino] imidazole-4-carboxamide isomerase.